Here is a 425-residue protein sequence, read N- to C-terminus: Light-independent protochlorophyllide reductase subunit N (425 aa).

Residues Cys-17, Cys-42, and Cys-103 each coordinate [4Fe-4S] cluster.

It belongs to the BchN/ChlN family. Protochlorophyllide reductase is composed of three subunits; ChlL, ChlN and ChlB. Forms a heterotetramer of two ChlB and two ChlN subunits. Requires [4Fe-4S] cluster as cofactor.

The catalysed reaction is chlorophyllide a + oxidized 2[4Fe-4S]-[ferredoxin] + 2 ADP + 2 phosphate = protochlorophyllide a + reduced 2[4Fe-4S]-[ferredoxin] + 2 ATP + 2 H2O. Its pathway is porphyrin-containing compound metabolism; chlorophyll biosynthesis (light-independent). In terms of biological role, component of the dark-operative protochlorophyllide reductase (DPOR) that uses Mg-ATP and reduced ferredoxin to reduce ring D of protochlorophyllide (Pchlide) to form chlorophyllide a (Chlide). This reaction is light-independent. The NB-protein (ChlN-ChlB) is the catalytic component of the complex. The chain is Light-independent protochlorophyllide reductase subunit N from Parasynechococcus marenigrum (strain WH8102).